Reading from the N-terminus, the 636-residue chain is TNFAIP3-interacting protein 1 (636 aa).

A coiled-coil region spans residues Glu20–Leu73. The segment covering Gln61–Glu71 has biased composition (basic and acidic residues). Disordered regions lie at residues Gln61–Pro151 and Met252–Ala283. Ser77 is modified (phosphoserine). The interval Ser94–Gln412 is interaction with Nef. Residues Glu131–Ala142 are compositionally biased toward polar residues. Residues Ser196–Glu258 are a coiled coil. Ser284 bears the Phosphoserine mark. A coiled-coil region spans residues Val294–Tyr535. The segment at Asp351–Leu367 is interaction with Shigella flexneri ipah9.8. Ser403 carries the post-translational modification Phosphoserine. A required for inhibitory activity of TNF-induced NF-kappa-B activation region spans residues Thr431–Ser588. At Thr438 the chain carries Phosphothreonine. Ser442 is subject to Phosphoserine. The tract at residues Lys452–Ala510 is ubiquitin-binding domain (UBD). Positions Gln524–Ala530 match the Nuclear localization signal motif. Phosphotyrosine is present on Tyr552. Residue Arg571 is modified to Asymmetric dimethylarginine. Arg599 carries the asymmetric dimethylarginine; alternate modification. Arg599 bears the Omega-N-methylarginine; alternate mark. The disordered stretch occupies residues Gly603–Gln636. Basic and acidic residues predominate over residues Thr623–Gln636. Position 627 is a phosphoserine (Ser627).

Interacts with TNFAIP3 and IKBKG (polyubiquitinated); facilitates TNFAIP3-mediated de-ubiquitination of NEMO/IKBKG. Interacts with polyubiquitin. Interacts with MAPK1, SELPLG and PIK3CD. Interacts with IRAK1 (polyubiquitinated). Interacts with MYD88; the interaction is indicative for participation in an activated TLR-signaling complex. Interacts with HIV-1 matrix protein. Interacts with TAX1BP1. In terms of assembly, (Microbial infection) Interacts with Shigella flexneri ipah9.8; the interaction promotes polyubiquitination of IKBKG. Phosphorylation at Tyr-552 by SRC-family kinases recruits phosphoinositide-3-kinase (PI3K) PIK3CD:p85 heterodimer which results in integrin activation and leukocyte adhesion to activated endothelium during inflammation. As to expression, ubiquitous. Strongly expressed in peripheral blood lymphocytes, spleen and skeletal muscle, and is weakly expressed in the brain. In peripheral blood mononucleocytes, isoform 4 is mainly expressed and isoform 1 and isoform 7 are almost not expressed. Expression of isoform 1 and isoform 7 increases in leukemic cells.

It is found in the cytoplasm. It localises to the nucleus. In terms of biological role, inhibits NF-kappa-B activation and TNF-induced NF-kappa-B-dependent gene expression by regulating TAX1BP1 and A20/TNFAIP3-mediated deubiquitination of IKBKG; proposed to link A20/TNFAIP3 to ubiquitinated IKBKG. Involved in regulation of EGF-induced ERK1/ERK2 signaling pathway; blocks MAPK3/MAPK1 nuclear translocation and MAPK1-dependent transcription. Increases cell surface CD4(T4) antigen expression. Involved in the anti-inflammatory response of macrophages and positively regulates TLR-induced activation of CEBPB. Involved in the prevention of autoimmunity; this function implicates binding to polyubiquitin. Involved in leukocyte integrin activation during inflammation; this function is mediated by association with SELPLG and dependent on phosphorylation by SRC-family kinases. Interacts with HIV-1 matrix protein and is packaged into virions and overexpression can inhibit viral replication. May regulate matrix nuclear localization, both nuclear import of PIC (Preintegration complex) and export of GAG polyprotein and viral genomic RNA during virion production. In case of infection, promotes association of IKBKG with Shigella flexneri E3 ubiquitin-protein ligase ipah9.8 p which in turn promotes polyubiquitination of IKBKG leading to its proteasome-dependent degradation and thus is perturbing NF-kappa-B activation during bacterial infection. The chain is TNFAIP3-interacting protein 1 (TNIP1) from Homo sapiens (Human).